Consider the following 162-residue polypeptide: UPF0114 protein Sfri_3655 (162 aa).

Helical transmembrane passes span 15 to 35 (IMAP…IKFF), 53 to 73 (LVLI…LIMV), and 136 to 156 (IMWY…MGYL).

It belongs to the UPF0114 family.

It is found in the cell membrane. The chain is UPF0114 protein Sfri_3655 from Shewanella frigidimarina (strain NCIMB 400).